A 137-amino-acid polypeptide reads, in one-letter code: DNA-binding protein H-NS (137 aa).

The stretch at 13-65 forms a coiled coil; it reads TLRAQARECTLETLEEMLEKLEVVVNERREEESAAAAEVEERTRKLQQYREML. Residues 112–117 mediate DNA binding; the sequence is QGRTPA.

This sequence belongs to the histone-like protein H-NS family. In terms of assembly, homodimer that oligomerizes on DNA into higher-order complexes that form bridges between disparate regions of DNA compacting it. Interacts with Hha, YdgT and StpA.

The protein resides in the cytoplasm. The protein localises to the nucleoid. A DNA-binding protein implicated in transcriptional repression and chromosome organization and compaction. Binds AT-rich DNA, repressing its transcription; about 754/4438 tested genes (15%) bind to H-NS, 70% of these are AT-rich and correspond to horizontally transferred geness (HTG), thus playing a central role in silencing foreign genes. This offers the selective advantage of silencing foreign DNA. Binds nucleation sites in AT-rich DNA and bridges them, forming higher-order nucleoprotein complexes and condensing the chromosome. A subset of genes are repressed by H-NS in association with Hha and/or YdgT. The sequence is that of DNA-binding protein H-NS (hns) from Salmonella typhimurium (strain 14028s / SGSC 2262).